Reading from the N-terminus, the 269-residue chain is 4-hydroxy-tetrahydrodipicolinate reductase (269 aa).

11 to 16 (GPIGRM) contacts NAD(+). Position 39 (K39) interacts with NADP(+). NAD(+)-binding positions include 101 to 103 (GTT) and 125 to 128 (ASNF). H158 serves as the catalytic Proton donor/acceptor. H159 serves as a coordination point for (S)-2,3,4,5-tetrahydrodipicolinate. K162 (proton donor) is an active-site residue. 168 to 169 (GT) contributes to the (S)-2,3,4,5-tetrahydrodipicolinate binding site.

This sequence belongs to the DapB family. Homotetramer.

The protein localises to the cytoplasm. It catalyses the reaction (S)-2,3,4,5-tetrahydrodipicolinate + NAD(+) + H2O = (2S,4S)-4-hydroxy-2,3,4,5-tetrahydrodipicolinate + NADH + H(+). The catalysed reaction is (S)-2,3,4,5-tetrahydrodipicolinate + NADP(+) + H2O = (2S,4S)-4-hydroxy-2,3,4,5-tetrahydrodipicolinate + NADPH + H(+). It functions in the pathway amino-acid biosynthesis; L-lysine biosynthesis via DAP pathway; (S)-tetrahydrodipicolinate from L-aspartate: step 4/4. Catalyzes the conversion of 4-hydroxy-tetrahydrodipicolinate (HTPA) to tetrahydrodipicolinate. This chain is 4-hydroxy-tetrahydrodipicolinate reductase, found in Buchnera aphidicola subsp. Acyrthosiphon pisum (strain 5A).